The following is a 2375-amino-acid chain: Talin-2 (2375 aa).

An FERM domain is found at 88 to 406 (RPQKIRMLDG…GYIDIILKKK (319 aa)). The tract at residues 312-406 (GVSFFLVKEK…GYIDIILKKK (95 aa)) is interaction with PIP5K1C. Phosphoserine is present on residues Ser428, Ser450, Ser624, and Ser1024. Position 1666 is a phosphotyrosine (Tyr1666). The I/LWEQ domain maps to 2205–2375 (TEWVDPEDPT…KRLQAAGNAV (171 aa)).

As to quaternary structure, interacts directly with PIP5K1C.

Its subcellular location is the cytoplasm. The protein localises to the cell junction. It is found in the focal adhesion. The protein resides in the synapse. It localises to the cell membrane. Its subcellular location is the cytoskeleton. In terms of biological role, as a major component of focal adhesion plaques that links integrin to the actin cytoskeleton, may play an important role in cell adhesion. Recruits PIP5K1C to focal adhesion plaques and strongly activates its kinase activity. The protein is Talin-2 (Tln2) of Mus musculus (Mouse).